A 226-amino-acid chain; its full sequence is Phosphoribosylformylglycinamidine synthase subunit PurQ (226 aa).

Residues 2–226 (KIAVIVFPGS…LENGTVIAEG (225 aa)) form the Glutamine amidotransferase type-1 domain. The active-site Nucleophile is the Cys-86. Catalysis depends on residues His-195 and Glu-197.

As to quaternary structure, part of the FGAM synthase complex composed of 1 PurL, 1 PurQ and 2 PurS subunits.

It localises to the cytoplasm. The enzyme catalyses N(2)-formyl-N(1)-(5-phospho-beta-D-ribosyl)glycinamide + L-glutamine + ATP + H2O = 2-formamido-N(1)-(5-O-phospho-beta-D-ribosyl)acetamidine + L-glutamate + ADP + phosphate + H(+). The catalysed reaction is L-glutamine + H2O = L-glutamate + NH4(+). Its pathway is purine metabolism; IMP biosynthesis via de novo pathway; 5-amino-1-(5-phospho-D-ribosyl)imidazole from N(2)-formyl-N(1)-(5-phospho-D-ribosyl)glycinamide: step 1/2. Functionally, part of the phosphoribosylformylglycinamidine synthase complex involved in the purines biosynthetic pathway. Catalyzes the ATP-dependent conversion of formylglycinamide ribonucleotide (FGAR) and glutamine to yield formylglycinamidine ribonucleotide (FGAM) and glutamate. The FGAM synthase complex is composed of three subunits. PurQ produces an ammonia molecule by converting glutamine to glutamate. PurL transfers the ammonia molecule to FGAR to form FGAM in an ATP-dependent manner. PurS interacts with PurQ and PurL and is thought to assist in the transfer of the ammonia molecule from PurQ to PurL. The chain is Phosphoribosylformylglycinamidine synthase subunit PurQ from Limosilactobacillus fermentum (strain NBRC 3956 / LMG 18251) (Lactobacillus fermentum).